Here is a 360-residue protein sequence, read N- to C-terminus: Aminomethyltransferase (360 aa).

The protein belongs to the GcvT family. The glycine cleavage system is composed of four proteins: P, T, L and H.

The catalysed reaction is N(6)-[(R)-S(8)-aminomethyldihydrolipoyl]-L-lysyl-[protein] + (6S)-5,6,7,8-tetrahydrofolate = N(6)-[(R)-dihydrolipoyl]-L-lysyl-[protein] + (6R)-5,10-methylene-5,6,7,8-tetrahydrofolate + NH4(+). Its function is as follows. The glycine cleavage system catalyzes the degradation of glycine. In Legionella pneumophila (strain Paris), this protein is Aminomethyltransferase.